The primary structure comprises 311 residues: Homeobox-leucine zipper protein HOX1 (311 aa).

Disordered regions lie at residues 29-69 (AGGA…SDHR) and 97-160 (AETT…KKLR). The span at 119–145 (SSPNSTLSSLSGKRGAPSAATAAAAAA) shows a compositional bias: low complexity. Positions 154 to 213 (GSRKKLRLSKDQAAVLEDTFKEHNTLNPKQKAALARQLNLKPRQVEVWFQNRRARTKLKQ) form a DNA-binding region, homeobox. Residues 212–256 (KQTEVDCELLKRCCETLTDENRRLHRELQELRALKLATAAAAPHH) form a leucine-zipper region. The segment at 279-311 (SAATTTRNNSGAAPARPVPTRPWPPAAAQRSSA) is disordered. Over residues 280–289 (AATTTRNNSG) the composition is skewed to polar residues. The span at 294–303 (RPVPTRPWPP) shows a compositional bias: pro residues.

Belongs to the HD-ZIP homeobox family. Class II subfamily. In terms of assembly, homodimer. May form a heterodimer with HOX2, HOX3 or HOX7. As to expression, expressed in root provascular and vascular cylinder, provascular and vascular strands of leaves, provascular and vascular strands of the whole panicle, in mature embryo provascular bundles of scutellum and embryonic axis and provascular and vascular strands of young immature spikelet organs. Expressed in differentiating and differentiated xylem and phloem elements, and in outer and inner bundle sheath cells of all vascular bundles. Expressed in auricles, ligules, culm, guard cells brac hairs and pollen.

It is found in the nucleus. Probable transcription repressor involved leaf development. Binds to the DNA sequence 5'-CAAT[GC]ATTG-3'. May act as a regulatory switch to specify provascular cell fate. In Oryza sativa subsp. japonica (Rice), this protein is Homeobox-leucine zipper protein HOX1 (HOX1).